A 349-amino-acid polypeptide reads, in one-letter code: Dihydroorotase (349 aa).

Positions 17 and 19 each coordinate Zn(2+). Substrate is bound by residues 19-21 (HLR) and asparagine 45. Residues lysine 105, histidine 142, and histidine 180 each contribute to the Zn(2+) site. Lysine 105 carries the post-translational modification N6-carboxylysine. Histidine 142 lines the substrate pocket. Leucine 225 is a binding site for substrate. Aspartate 253 is a binding site for Zn(2+). Aspartate 253 is an active-site residue. Residues histidine 257 and alanine 269 each coordinate substrate.

It belongs to the metallo-dependent hydrolases superfamily. DHOase family. Class II DHOase subfamily. In terms of assembly, homodimer. The cofactor is Zn(2+).

The enzyme catalyses (S)-dihydroorotate + H2O = N-carbamoyl-L-aspartate + H(+). The protein operates within pyrimidine metabolism; UMP biosynthesis via de novo pathway; (S)-dihydroorotate from bicarbonate: step 3/3. Catalyzes the reversible cyclization of carbamoyl aspartate to dihydroorotate. This chain is Dihydroorotase, found in Nitrosomonas europaea (strain ATCC 19718 / CIP 103999 / KCTC 2705 / NBRC 14298).